Consider the following 1145-residue polypeptide: Cellulose synthase-like protein D3 (1145 aa).

Positions methionine 1 to aspartate 19 are enriched in polar residues. 2 disordered regions span residues methionine 1–arginine 38 and aspartate 189–aspartate 208. The next 2 helical transmembrane spans lie at valine 289–methionine 309 and alanine 319–leucine 339. Aspartate 419 is a catalytic residue. A Phosphoserine modification is found at serine 755. Aspartate 848 is a catalytic residue. A run of 6 helical transmembrane segments spans residues phenylalanine 930–valine 950, threonine 956–isoleucine 976, leucine 1002–leucine 1022, serine 1045–phenylalanine 1065, leucine 1079–glycine 1099, and threonine 1109–isoleucine 1129.

It belongs to the glycosyltransferase 2 family. Plant cellulose synthase-like D subfamily. In terms of tissue distribution, preferentially expressed in root hair cells. Expressed in roots, leaves, stems, flowers and siliques.

The protein localises to the golgi apparatus membrane. In terms of biological role, thought to be a Golgi-localized beta-glycan synthase that polymerize the backbones of noncellulosic polysaccharides (hemicelluloses) of plant cell wall. Required for synthesis of a cell wall polysaccharide essential for root hair elongation, but not initiation. May be the functional ortholog of rice CSLD1. The protein is Cellulose synthase-like protein D3 (CSLD3) of Arabidopsis thaliana (Mouse-ear cress).